The sequence spans 306 residues: Curved DNA-binding protein (306 aa).

In terms of domain architecture, J spans 5-69 (DYYAIMGVKP…QRRAEYDQMW (65 aa)).

Its subcellular location is the cytoplasm. It is found in the nucleoid. In terms of biological role, DNA-binding protein that preferentially recognizes a curved DNA sequence. It is probably a functional analog of DnaJ; displays overlapping activities with DnaJ, but functions under different conditions, probably acting as a molecular chaperone in an adaptive response to environmental stresses other than heat shock. Lacks autonomous chaperone activity; binds native substrates and targets them for recognition by DnaK. Its activity is inhibited by the binding of CbpM. The sequence is that of Curved DNA-binding protein from Escherichia coli (strain K12 / MC4100 / BW2952).